A 357-amino-acid chain; its full sequence is Geranylgeranyl pyrophosphate synthase, chloroplastic (357 aa).

The N-terminal 40 residues, 1 to 40 (MRSNLCHPLKNQLPISFFLSGTIRKPIFSCSRLSISAIIT), are a transit peptide targeting the chloroplast. Isopentenyl diphosphate is bound by residues lysine 106, arginine 109, and histidine 138. Aspartate 145 and aspartate 151 together coordinate Mg(2+). Position 156 (arginine 156) interacts with dimethylallyl diphosphate. Arginine 157 is an isopentenyl diphosphate binding site. Dimethylallyl diphosphate-binding residues include lysine 242, threonine 243, glutamine 280, lysine 297, and lysine 307.

Belongs to the FPP/GGPP synthase family. Mg(2+) is required as a cofactor.

The protein localises to the plastid. The protein resides in the chloroplast. The enzyme catalyses isopentenyl diphosphate + dimethylallyl diphosphate = (2E)-geranyl diphosphate + diphosphate. It carries out the reaction isopentenyl diphosphate + (2E)-geranyl diphosphate = (2E,6E)-farnesyl diphosphate + diphosphate. It catalyses the reaction isopentenyl diphosphate + (2E,6E)-farnesyl diphosphate = (2E,6E,10E)-geranylgeranyl diphosphate + diphosphate. The protein operates within isoprenoid biosynthesis; farnesyl diphosphate biosynthesis; farnesyl diphosphate from geranyl diphosphate and isopentenyl diphosphate: step 1/1. It participates in isoprenoid biosynthesis; geranyl diphosphate biosynthesis; geranyl diphosphate from dimethylallyl diphosphate and isopentenyl diphosphate: step 1/1. It functions in the pathway isoprenoid biosynthesis; geranylgeranyl diphosphate biosynthesis; geranylgeranyl diphosphate from farnesyl diphosphate and isopentenyl diphosphate: step 1/1. Functionally, catalyzes the trans-addition of the three molecules of IPP onto DMAPP to form geranylgeranyl pyrophosphate. This chain is Geranylgeranyl pyrophosphate synthase, chloroplastic (GGPS1), found in Catharanthus roseus (Madagascar periwinkle).